Consider the following 199-residue polypeptide: MSLVPMVVEQTSRGERSYDIFSRLLKERIIMLSGEVNDDSSNLIVSQLLFLESEDPDKDISIYINSPGGSITAGMAIYDTMQYIKPDVSTICVGMAASMGAFLLSSGAKGKRYALPNAEIMIHQPLGGFQGQATDIQIHANRILKIKESLNKILSENTNQPLEVIEADVERDNFMTADEAKAYGLVDKVITKNGTGKDK.

Ser-98 (nucleophile) is an active-site residue. The active site involves His-123.

It belongs to the peptidase S14 family. As to quaternary structure, fourteen ClpP subunits assemble into 2 heptameric rings which stack back to back to give a disk-like structure with a central cavity, resembling the structure of eukaryotic proteasomes.

It is found in the cytoplasm. The enzyme catalyses Hydrolysis of proteins to small peptides in the presence of ATP and magnesium. alpha-casein is the usual test substrate. In the absence of ATP, only oligopeptides shorter than five residues are hydrolyzed (such as succinyl-Leu-Tyr-|-NHMec, and Leu-Tyr-Leu-|-Tyr-Trp, in which cleavage of the -Tyr-|-Leu- and -Tyr-|-Trp bonds also occurs).. Cleaves peptides in various proteins in a process that requires ATP hydrolysis. Has a chymotrypsin-like activity. Plays a major role in the degradation of misfolded proteins. This chain is ATP-dependent Clp protease proteolytic subunit, found in Clostridium botulinum (strain Alaska E43 / Type E3).